Reading from the N-terminus, the 546-residue chain is MGAYLSQPNTVKCSGDGVGAPRLPLPYGFSAMQGWRVSMEDAHNCIPELDSETAMFSVYDGHGGEEVALYCAKYLPDIIKDQKAYKEGKLQKALEDAFLAIDAKLTTEEVIKELAQIAGRPTEDEDEKEKVADEDDVDNEEAALLHEEATMTIEELLTRYGQNCHKGPPHSKSGGGTGEEPGSQGLNGEAGPEDSTRETPSQENGPTAKAYTGFSSNSERGTEAGQVGEPGIPTGEAGPSCSSASDKLPRVAKSKFFEDSEDESDEAEEEEEDSEECSEEEDGYSSEEAENEEDEDDTEEAEEDDEEEEEEMMVPGMEGKEEPGSDSGTTAVVALIRGKQLIVANAGDSRCVVSEAGKALDMSYDHKPEDEVELARIKNAGGKVTMDGRVNGGLNLSRAIGDHFYKRNKNLPPEEQMISALPDIKVLTLTDDHEFMVIACDGIWNVMSSQEVVDFIQSKISQRDENGELRLLSSIVEELLDQCLAPDTSGDGTGCDNMTCIIICFKPRNTAELQPESGKRKLEEVLSTEGAEENGNSDKKKKAKRD.

Residue Gly-2 is the site of N-myristoyl glycine attachment. At Arg-22 the chain carries Omega-N-methylarginine. One can recognise a PPM-type phosphatase domain in the interval 26 to 505; sequence PYGFSAMQGW…DNMTCIIICF (480 aa). Residues Asp-60 and Gly-61 each contribute to the Mn(2+) site. Disordered stretches follow at residues 116–139 and 161–328; these read QIAG…DVDN and GQNC…SDSG. Thr-122 is subject to Phosphothreonine. Positions 123 to 139 are enriched in acidic residues; sequence EDEDEKEKVADEDDVDN. Position 183 is a phosphoserine (Ser-183). Residues 259–312 show a composition bias toward acidic residues; sequence DSEDESDEAEEEEEDSEECSEEEDGYSSEEAENEEDEDDTEEAEEDDEEEEEEM. At Lys-383 the chain carries N6-acetyllysine. Residues Asp-441 and Asp-496 each contribute to the Mn(2+) site. The disordered stretch occupies residues 512–546; it reads ELQPESGKRKLEEVLSTEGAEENGNSDKKKKAKRD. Ser-527 is modified (phosphoserine).

The protein belongs to the PP2C family. As to quaternary structure, interacts with NOL3; may dephosphorylate NOL3. Mg(2+) serves as cofactor. Mn(2+) is required as a cofactor. As to expression, widely expressed. Most abundant in testis, skeletal muscle, and heart.

It localises to the cytoplasm. The protein localises to the membrane. The enzyme catalyses O-phospho-L-seryl-[protein] + H2O = L-seryl-[protein] + phosphate. It carries out the reaction O-phospho-L-threonyl-[protein] + H2O = L-threonyl-[protein] + phosphate. The sequence is that of Protein phosphatase 1G (PPM1G) from Homo sapiens (Human).